Reading from the N-terminus, the 576-residue chain is MADPQTVLARRVQSALGAAFGPEYRDTDPVIRPSQFADFQANVALALAKRLRRSPRDVATAITEHLDISDVCSKVEISGPGFINLTLRDDWIAHQVHDLLTDERLGTPVQESQNIPIDYSAPNVAKEMHVGHLRTTVVGDALARILEFLGHHVIRQNHIGDWGTPFGMLIEHLLEVGEDSAEAAQLKSDPNAFYQAARAKFDSDEDFADRARRRVVALQSGDAETLRLWRDLIELSKIYFNRIYRKLDVTLTDAHLAGESTYNDMLGPVCDELAEKGLAVVSDGALCVFLEGFTGREGKPVPLIIRKSDGGYGYATTDLATIKYRVEQLKADRIIYVVGAPQSLHLRMVYETARQAGWLGNAEPIHVQIGNVLGSDGKILRTRSGAPVRLMALLDEAVERASAVVAQTRPDLDEETRAAIARDVGIGAVKYADLSIAHDTEYVFDFDRMLALNGNTGPYLQYAVARIRSIFRKGGIDPAQVTGPIQVTEPAERALALKLLDFGATVVQVGDTLEPHRLCTYLFDLAQTFTAFYEACPVLKADRDEVRNSRLALTAVTLHTLVKGLDLLGVRAPEQM.

The short motif at 122–132 is the 'HIGH' region element; sequence PNVAKEMHVGH.

This sequence belongs to the class-I aminoacyl-tRNA synthetase family. Monomer.

The protein localises to the cytoplasm. The catalysed reaction is tRNA(Arg) + L-arginine + ATP = L-arginyl-tRNA(Arg) + AMP + diphosphate. This Thermobifida fusca (strain YX) protein is Arginine--tRNA ligase.